The sequence spans 262 residues: Elongator complex protein 5 (262 aa).

2 disordered regions span residues 181–214 (TPLD…FKIE) and 229–262 (PYER…DLCI). The segment covering 200–211 (AEQTTEPASSTF) has biased composition (polar residues). Positions 246–262 (DADDDFDEEDPDEDLCI) are enriched in acidic residues.

It belongs to the ELP5 family. As to quaternary structure, component of the elongator complex composed of Elp1, Elp2, Elp3, Elp4, Elp5 and Elp6. The elongator complex associates with and stabilizes microtubules; efficient interaction requires the full complex.

It localises to the cytoplasm. The protein localises to the nucleus. It is found in the cytoskeleton. The protein resides in the spindle. It participates in tRNA modification; 5-methoxycarbonylmethyl-2-thiouridine-tRNA biosynthesis. Functionally, component of the elongator complex, which is required for multiple tRNA modifications, including mcm5U (5-methoxycarbonylmethyl uridine), mcm5s2U (5-methoxycarbonylmethyl-2-thiouridine), and ncm5U (5-carbamoylmethyl uridine). The elongator complex catalyzes the formation of carboxymethyluridine in the wobble base at position 34 in tRNAs. Binding by the elongator complex stabilizes microtubules and promotes their growth. This induces central spindle asymmetry, promoting polarized signaling endosome trafficking during asymmetric cell division and cell fate assignation of sensory organ precursor cells. The protein is Elongator complex protein 5 of Drosophila melanogaster (Fruit fly).